We begin with the raw amino-acid sequence, 430 residues long: Asparagine--tRNA ligase (430 aa).

This sequence belongs to the class-II aminoacyl-tRNA synthetase family. In terms of assembly, homodimer.

It is found in the cytoplasm. The enzyme catalyses tRNA(Asn) + L-asparagine + ATP = L-asparaginyl-tRNA(Asn) + AMP + diphosphate + H(+). The sequence is that of Asparagine--tRNA ligase from Staphylococcus saprophyticus subsp. saprophyticus (strain ATCC 15305 / DSM 20229 / NCIMB 8711 / NCTC 7292 / S-41).